A 33-amino-acid chain; its full sequence is Mu/omega-theraphotoxin-Tap2a (33 aa).

Intrachain disulfides connect C2/C17, C9/C22, and C16/C29.

Belongs to the neurotoxin 10 (Hwtx-1) family. 59 (Tltx) subfamily. Expressed by the venom gland.

Its subcellular location is the secreted. In terms of biological role, gating-modifier toxin that inhibits both sodium (Nav) and calcium (Cav3) channels by inducing hyperpolarizing shift in voltage-dependence of activation and steady state inactivation. Inhibits Nav1.1/SCN1A, Nav1.2/SCN2A, Nav1.6/SCN6A, Nav1.7/SCN9A and Cav3.1/CACNA1G sodium and calcium channels at nanomolar concentrations (IC(50)=169-621 nM). Surprisingly, selectively slows fast inactivation of Nav1.3/SCN3A. Also shows moderate inhibition of Nav1.3/SCN3A sodium channels (IC(50)=1216 nM). In Theraphosa apophysis (Goliath pinkfoot tarantula), this protein is Mu/omega-theraphotoxin-Tap2a.